Reading from the N-terminus, the 291-residue chain is Ecto-ADP-ribosyltransferase 5 (291 aa).

The first 22 residues, 1-22 (MALAALMIALGSLGLHTWQAQA), serve as a signal peptide directing secretion. Cys42 and Cys258 are joined by a disulfide. The TR mART core domain maps to 62–252 (ALLRESWEAA…LVTLWSYNQT (191 aa)). Tyr99 serves as a coordination point for NAD(+). Residue Asn101 is glycosylated (N-linked (GlcNAc...) asparagine). Residues Arg160 and Gln180 each contribute to the NAD(+) site. Residue Arg160 is part of the active site. Ser183 is an active-site residue. A glycan (N-linked (GlcNAc...) asparagine) is linked at Asn196. Ser214 lines the NAD(+) pocket. Glu221 is a catalytic residue. Asn250 carries an N-linked (GlcNAc...) asparagine glycan.

Belongs to the Arg-specific ADP-ribosyltransferase family.

The protein localises to the secreted. It carries out the reaction L-arginyl-[protein] + NAD(+) = N(omega)-(ADP-D-ribosyl)-L-arginyl-[protein] + nicotinamide + H(+). The sequence is that of Ecto-ADP-ribosyltransferase 5 (ART5) from Homo sapiens (Human).